A 98-amino-acid polypeptide reads, in one-letter code: Keratin-associated protein 3-3 (98 aa).

The residue at position 2 (Ala2) is an N-acetylalanine. Repeat copies occupy residues 3 to 7 (CCAPL), 8 to 12 (CCSAR), and 47 to 51 (CCDNC). The interval 3–59 (CCAPLCCSARTSPATTICSSDKFCRCGVCLPSTCPHTVWLLEPTCCDNCPPPCHIPQ) is 3 X 5 AA repeats of C-C-X(3).

This sequence belongs to the KRTAP type 3 family. As to quaternary structure, interacts with hair keratins.

Functionally, in the hair cortex, hair keratin intermediate filaments are embedded in an interfilamentous matrix, consisting of hair keratin-associated proteins (KRTAP), which are essential for the formation of a rigid and resistant hair shaft through their extensive disulfide bond cross-linking with abundant cysteine residues of hair keratins. The matrix proteins include the high-sulfur and high-glycine-tyrosine keratins. The sequence is that of Keratin-associated protein 3-3 from Bos taurus (Bovine).